We begin with the raw amino-acid sequence, 452 residues long: Pup--protein ligase (452 aa).

Glu-9 is a binding site for Mg(2+). Arg-53 lines the ATP pocket. Residue Tyr-55 coordinates Mg(2+). Asp-57 acts as the Proton acceptor in catalysis. A Mg(2+)-binding site is contributed by Glu-63. Positions 66 and 419 each coordinate ATP.

It belongs to the Pup ligase/Pup deamidase family. Pup-conjugating enzyme subfamily.

It carries out the reaction ATP + [prokaryotic ubiquitin-like protein]-L-glutamate + [protein]-L-lysine = ADP + phosphate + N(6)-([prokaryotic ubiquitin-like protein]-gamma-L-glutamyl)-[protein]-L-lysine.. The protein operates within protein degradation; proteasomal Pup-dependent pathway. It functions in the pathway protein modification; protein pupylation. Its function is as follows. Catalyzes the covalent attachment of the prokaryotic ubiquitin-like protein modifier Pup to the proteasomal substrate proteins, thereby targeting them for proteasomal degradation. This tagging system is termed pupylation. The ligation reaction involves the side-chain carboxylate of the C-terminal glutamate of Pup and the side-chain amino group of a substrate lysine. This chain is Pup--protein ligase, found in Gordonia bronchialis (strain ATCC 25592 / DSM 43247 / BCRC 13721 / JCM 3198 / KCTC 3076 / NBRC 16047 / NCTC 10667) (Rhodococcus bronchialis).